The chain runs to 320 residues: Cytochrome f (320 aa).

An N-terminal signal peptide occupies residues 1–35; it reads MQNRNTFSWVKDQMSRFISVSIMIYVITRTSISNA. The heme site is built by tyrosine 36, cysteine 56, cysteine 59, and histidine 60. Residues 286–306 form a helical membrane-spanning segment; sequence VQGLLFFFASVILAQIFLVLK.

It belongs to the cytochrome f family. In terms of assembly, the 4 large subunits of the cytochrome b6-f complex are cytochrome b6, subunit IV (17 kDa polypeptide, petD), cytochrome f and the Rieske protein, while the 4 small subunits are PetG, PetL, PetM and PetN. The complex functions as a dimer. It depends on heme as a cofactor.

It localises to the plastid. The protein localises to the chloroplast thylakoid membrane. In terms of biological role, component of the cytochrome b6-f complex, which mediates electron transfer between photosystem II (PSII) and photosystem I (PSI), cyclic electron flow around PSI, and state transitions. The polypeptide is Cytochrome f (Ceratophyllum demersum (Rigid hornwort)).